The chain runs to 1028 residues: Beta-galactosidase (1028 aa).

The substrate site is built by Asn104 and Asp203. A Na(+)-binding site is contributed by Asp203. Residues Glu418, His420, and Glu463 each coordinate Mg(2+). Residues Glu463 and 539–542 (EYAH) each bind substrate. Residue Glu463 is the Proton donor of the active site. The Nucleophile role is filled by Glu539. Asn599 is a binding site for Mg(2+). Positions 603 and 606 each coordinate Na(+). Substrate is bound by residues Asn606 and Trp1004.

Belongs to the glycosyl hydrolase 2 family. In terms of assembly, homodimer. Requires Mg(2+) as cofactor. The cofactor is Mn(2+). It depends on Fe cation as a cofactor. Na(+) serves as cofactor. K(+) is required as a cofactor.

The catalysed reaction is Hydrolysis of terminal non-reducing beta-D-galactose residues in beta-D-galactosides.. Completely inhibited by Hg(2+), Cu(2+) Ag(2+), and partially inhibited by Zn(2+), imidazole and EDTA. Activated by Ca(2+), Co(2+), Ni(2+). Its function is as follows. This beta-galactosidase is also able to catalyze glycosyl transfer to a series of acceptors, including hexose, pentose, beta- or alpha-disaccharides, hexahydroxy alcohol, cyclitol, and aromatic glycosides, resulting in the production of galacto-oligosaccharides (GOS). This is Beta-galactosidase (lacZ) from Enterobacter agglomerans (Erwinia herbicola).